The following is a 53-amino-acid chain: MTLKRSVIGRPKNQVETVKALGLKKIGDSRELADTPAIRGMIKTVQHLVEVEA.

Belongs to the universal ribosomal protein uL30 family. In terms of assembly, part of the 50S ribosomal subunit.

In Deinococcus geothermalis (strain DSM 11300 / CIP 105573 / AG-3a), this protein is Large ribosomal subunit protein uL30.